An 85-amino-acid chain; its full sequence is UPF0386 protein RHE_CH01859 (85 aa).

Belongs to the UPF0386 family.

In Rhizobium etli (strain ATCC 51251 / DSM 11541 / JCM 21823 / NBRC 15573 / CFN 42), this protein is UPF0386 protein RHE_CH01859.